Reading from the N-terminus, the 348-residue chain is AT-hook motif nuclear-localized protein 9 (348 aa).

Residues 18–156 are disordered; it reads HRGLSGSGPP…MASVGELMPS (139 aa). Polar residues predominate over residues 31–46; that stretch reads GSPQQQQGLRHLPNQN. Residues 47–60 show a composition bias toward low complexity; it reads SPFGSGSTGFGSPS. A Bipartite nuclear localization signal motif is present at residues 98-106; it reads KRKRGRPRK. Residues 98–110 constitute a DNA-binding region (a.T hook 1); the sequence is KRKRGRPRKYGQD. Low complexity predominate over residues 112–131; that stretch reads SVSLALSSSSVSTITPNNSN. Residues 132–144 constitute a DNA-binding region (a.T hook 2); it reads KRGRGRPPGSGKK. A PPC domain is found at 157–299; that stretch reads SSGMSFTPHV…EEEASEVVQE (143 aa).

It is found in the nucleus. Transcription factor that specifically binds AT-rich DNA sequences related to the nuclear matrix attachment regions (MARs). The chain is AT-hook motif nuclear-localized protein 9 from Arabidopsis thaliana (Mouse-ear cress).